Consider the following 828-residue polypeptide: MDESALTLGTIDVSYLPHSSEYSVGRCKHTSEEWGECGFRPTIFRSATLKWKESLMSRKRPFVGRCCYSCTPQSWDKFFNPSIPSLGLRNVIYINETHTRHRGWLARRLSYVLFIQERDVHKGMFATNVTENVLNSSRVQEAIAEVAAELNPDGSAQQQSKAVNKVKKKAKRILQEMVATVSPAMIRLTGWVLLKLFNSFFWNIQIHKGQLEMVKAATETNLPLLFLPVHRSHIDYLLLTFILFCHNIKAPYIASGNNLNIPIFSTLIHKLGGFFIRRRLDETPDGRKDVLYRALLHGHIVELLRQQQFLEIFLEGTRSRSGKTSCARAGLLSVVVDTLSTNVIPDILIIPVGISYDRIIEGHYNGEQLGKPKKNESLWSVARGVIRMLRKNYGCVRVDFAQPFSLKEYLESQSQKPVSALLSLEQALLPAILPSRPSDAADEGRDTSINESRNATDESLRRRLIANLAEHILFTASKSCAIMSTHIVACLLLYRHRQGIDLSTLVEDFFVMKEEVLARDFDLGFSGNSEDVVMHAIQLLGNCVTITHTSRNDEFFITPSTTVPSVFELNFYSNGVLHVFIMEAIIACSLYAVLNKRGLGGPTSTPPNLISQEQLVRKAASLCYLLSNEGTISLPCQTFYQVCHETVGKFIQYGILTVAEHDDQEDISPSLAEQQWDKKLPEPLSWRSDEEDEDSDFGEEQRDCYLKVSQSKEHQQFITFLQRLLGPLLEAYSSAAIFVHNFSGPVPEPEYLQKLHKYLITRTERNVAVYAESATYCLVKNAVKMFKDIGVFKETKQKRVSVLELSSTFLPQCNRQKLLEYILSFVVL.

Topologically, residues 1-87 are cytoplasmic; that stretch reads MDESALTLGT…FFNPSIPSLG (87 aa). The tract at residues 80–120 is important for mitochondrial localization; the sequence is NPSIPSLGLRNVIYINETHTRHRGWLARRLSYVLFIQERDV. The stretch at 88 to 118 is an intramembrane region; that stretch reads LRNVIYINETHTRHRGWLARRLSYVLFIQER. Residues 119 to 828 are Cytoplasmic-facing; it reads DVHKGMFATN…LEYILSFVVL (710 aa). The HXXXXD motif motif lies at 230–235; the sequence is HRSHID. R278, R279, K288, R293, and R328 together coordinate CoA. At S380 the chain carries Phosphoserine. The segment at 435–455 is disordered; it reads SRPSDAADEGRDTSINESRNA. Basic and acidic residues predominate over residues 442 to 455; that stretch reads DEGRDTSINESRNA. R462 serves as a coordination point for CoA. Phosphoserine is present on residues S688 and S695. K780 and K784 each carry N6-acetyllysine.

Belongs to the GPAT/DAPAT family.

Its subcellular location is the mitochondrion outer membrane. It carries out the reaction sn-glycerol 3-phosphate + an acyl-CoA = a 1-acyl-sn-glycero-3-phosphate + CoA. The catalysed reaction is (9Z,12Z)-octadecadienoyl-CoA + sn-glycerol 3-phosphate = 1-(9Z,12Z)-octadecadienoyl-sn-glycero-3-phosphate + CoA. It catalyses the reaction sn-glycerol 3-phosphate + (9Z)-octadecenoyl-CoA = 1-(9Z-octadecenoyl)-sn-glycero-3-phosphate + CoA. The enzyme catalyses sn-glycerol 3-phosphate + octadecanoyl-CoA = 1-octadecanoyl-sn-glycero-3-phosphate + CoA. It carries out the reaction sn-glycerol 3-phosphate + hexadecanoyl-CoA = 1-hexadecanoyl-sn-glycero-3-phosphate + CoA. The catalysed reaction is dodecanoyl-CoA + sn-glycerol 3-phosphate = 1-dodecanoyl-sn-glycerol 3-phosphate + CoA. It catalyses the reaction 1-acyl-sn-glycero-3-phospho-(1'-sn-glycerol) + an acyl-CoA = a 1,2-diacyl-sn-glycero-3-phospho-(1'-sn-glycerol) + CoA. The protein operates within phospholipid metabolism; CDP-diacylglycerol biosynthesis; CDP-diacylglycerol from sn-glycerol 3-phosphate: step 1/3. Functionally, mitochondrial membrane protein that catalyzes the essential first step of biosynthesis of glycerolipids such as triglycerides, phosphatidic acids and lysophosphatidic acids. Esterifies acyl-group from acyl-coenzyme A (acyl-CoA) to the sn-1 position of glycerol-3-phosphate, to produce lysophosphatidic acid. Has a narrow hydrophobic binding cleft that selects for a linear acyl chain. Catalytic activity is higher for substrates with a 16-carbon acyl chain. The sequence is that of Glycerol-3-phosphate acyltransferase 1, mitochondrial from Homo sapiens (Human).